The primary structure comprises 929 residues: Collagen alpha-1(XII) chain (929 aa).

A VWFA 1 domain is found at 1 to 49 (DVEIFAVGVKDAVRSELEAIATPPTATHVYTVEDFDAFQRISFELTQSI). Fibronectin type-III domains are found at residues 67–156 (PPRD…LEVR), 158–250 (APRN…VGEP), 251–340 (KNLR…LQER), 342–432 (SPRD…ASPD), 434–521 (KIVK…LSPF), and 523–613 (APRS…TLRD). Residue Asn98 is glycosylated (N-linked (GlcNAc...) asparagine). 3 O-linked (Xyl...) (chondroitin sulfate) serine glycosylation sites follow: Ser231, Ser324, and Ser415. Residues 633 to 805 (DIVLLVDGSW…SLLTNIVNDL (173 aa)) form the VWFA 2 domain. The region spanning 821-910 (PPSNLVTSEP…AGTETTLPIP (90 aa)) is the Fibronectin type-III 7 domain.

It belongs to the fibril-associated collagens with interrupted helices (FACIT) family. In terms of assembly, trimer of identical chains each containing 190 kDa of non-triple-helical sequences. The triple-helical tail is stabilized by disulfide bonds at each end. Post-translationally, prolines at the third position of the tripeptide repeating unit (G-X-Y) are hydroxylated in some or all of the chains.

Its subcellular location is the secreted. It is found in the extracellular space. The protein localises to the extracellular matrix. Its function is as follows. Type XII collagen interacts with type I collagen-containing fibrils, the COL1 domain could be associated with the surface of the fibrils, and the COL2 and NC3 domains may be localized in the perifibrillar matrix. Could play a developmental role in regeneration. The polypeptide is Collagen alpha-1(XII) chain (Notophthalmus viridescens (Eastern newt)).